The sequence spans 273 residues: Zinc finger protein AZF2 (273 aa).

The disordered stretch occupies residues 33–64; the sequence is LKRKRSKRQRSHSPSSSSSSPPRSRPKSQNQD. The span at 34–43 shows a compositional bias: basic residues; that stretch reads KRKRSKRQRS. Low complexity predominate over residues 44–54; sequence HSPSSSSSSPP. 2 consecutive C2H2-type zinc fingers follow at residues 106-128 and 165-187; these read YKCNVCEKAFPSYQALGGHKASH and HECSICHKVFPTGQALGGHKRCH. Positions 195-215 are disordered; the sequence is GGGGGSKSISHSGSVSSTVSE. The span at 201-213 shows a compositional bias: low complexity; sequence KSISHSGSVSSTV.

Expressed in roots, radicles, cotyledons, hypocotyls, leaf veins, stems, sepals, petals, stamens, placenta, funiculi and maturated seeds.

The protein localises to the nucleus. Its function is as follows. Transcriptional repressor involved in the inhibition of plant growth under abiotic stress conditions. Can repress the expression of various genes, including osmotic stress and abscisic acid-repressive genes and auxin-inducible genes, by binding to their promoter regions in a DNA sequence-specific manner. Acts as a negative regulator of abscisic acid (ABA) signaling during seed germination. Probably involved in jasmonate (JA) early signaling response. May regulate the expression of the JA biosynthesis gene LOX3 and control the expression of TIFY10A/JAZ1, a key repressor in the JA signaling cascade. May act as a positive regulator of leaf senescence. Has been identified as a suppressor of the deficiency of yeast snf4 mutant to grow on non-fermentable carbon source. The protein is Zinc finger protein AZF2 (AZF2) of Arabidopsis thaliana (Mouse-ear cress).